Consider the following 110-residue polypeptide: Nucleoid-associated protein KPN78578_04440 (110 aa).

This sequence belongs to the YbaB/EbfC family. Homodimer.

The protein resides in the cytoplasm. The protein localises to the nucleoid. In terms of biological role, binds to DNA and alters its conformation. May be involved in regulation of gene expression, nucleoid organization and DNA protection. The protein is Nucleoid-associated protein KPN78578_04440 of Klebsiella pneumoniae subsp. pneumoniae (strain ATCC 700721 / MGH 78578).